The following is a 402-amino-acid chain: Acetate kinase (402 aa).

N7 provides a ligand contact to Mg(2+). ATP is bound at residue K14. R95 lines the substrate pocket. D152 (proton donor/acceptor) is an active-site residue. ATP contacts are provided by residues 212–216 (HLGNG), 286–288 (DMR), and 334–338 (GIGEN). Mg(2+) is bound at residue E388.

It belongs to the acetokinase family. As to quaternary structure, homodimer. The cofactor is Mg(2+). It depends on Mn(2+) as a cofactor.

It localises to the cytoplasm. The enzyme catalyses acetate + ATP = acetyl phosphate + ADP. It functions in the pathway metabolic intermediate biosynthesis; acetyl-CoA biosynthesis; acetyl-CoA from acetate: step 1/2. Catalyzes the formation of acetyl phosphate from acetate and ATP. Can also catalyze the reverse reaction. The polypeptide is Acetate kinase (Nitratidesulfovibrio vulgaris (strain DP4) (Desulfovibrio vulgaris)).